We begin with the raw amino-acid sequence, 132 residues long: Histone H2B.2 (132 aa).

A compositionally biased stretch (basic and acidic residues) spans 1–19; it reads MAPKAEKKPASKAPAEKKP. Residues 1–39 form a disordered region; it reads MAPKAEKKPASKAPAEKKPAAKKTSSSVDPSKKRTKARK. N6-acetyllysine; alternate occurs at positions 7 and 8. Glycyl lysine isopeptide (Lys-Gly) (interchain with G-Cter in SUMO); alternate cross-links involve residues Lys7 and Lys8. Position 11 is a phosphoserine (Ser11). Lys12 is subject to N6-acetyllysine. An N6-acetyllysine; alternate modification is found at Lys17. Residue Lys17 forms a Glycyl lysine isopeptide (Lys-Gly) (interchain with G-Cter in SUMO); alternate linkage. A Glycyl lysine isopeptide (Lys-Gly) (interchain with G-Cter in SUMO) cross-link involves residue Lys18. Residue Lys125 forms a Glycyl lysine isopeptide (Lys-Gly) (interchain with G-Cter in ubiquitin) linkage.

This sequence belongs to the histone H2B family. The nucleosome is a histone octamer containing two molecules each of H2A, H2B, H3 and H4 assembled in one H3-H4 heterotetramer and two H2A-H2B heterodimers. The octamer wraps approximately 147 bp of DNA. Post-translationally, monoubiquitinated by the UBC2-BRE1 complex to form H2BK123ub1. H2BK123ub1 gives a specific tag for epigenetic transcriptional activation and is also prerequisite for H3K4me and H3K79me formation. H2BK123ub1 also modulates the formation of double-strand breaks during meiosis and is a prerequisite for DNA-damage checkpoint activation. Phosphorylated by STE20 to form H2BS10ph during progression through meiotic prophase. May be correlated with chromosome condensation. In terms of processing, acetylated by GCN5 to form H2BK11ac and H2BK16ac. H2BK16ac can also be formed by ESA1. Acetylation of N-terminal lysines and particularly formation of H2BK11acK16ac has a positive effect on transcription. Post-translationally, sumoylation to form H2BK6su or H2BK7su, and probably also H2BK16su or H2BK17su, occurs preferentially near the telomeres and represses gene transcription.

It is found in the nucleus. The protein localises to the chromosome. Its function is as follows. Core component of nucleosome. Nucleosomes wrap and compact DNA into chromatin, limiting DNA accessibility to the cellular machineries which require DNA as a template. Histones thereby play a central role in transcription regulation, DNA repair, DNA replication and chromosomal stability. DNA accessibility is regulated via a complex set of post-translational modifications of histones, also called histone code, and nucleosome remodeling. This is Histone H2B.2 (HTB1) from Kluyveromyces lactis (strain ATCC 8585 / CBS 2359 / DSM 70799 / NBRC 1267 / NRRL Y-1140 / WM37) (Yeast).